The sequence spans 420 residues: 3-oxo-tetronate kinase (420 aa).

Residues Ser-258, 360–363 (GGET), and Gly-403 each bind ATP.

Belongs to the four-carbon acid sugar kinase family.

It catalyses the reaction 3-dehydro-L-erythronate + ATP = 3-dehydro-4-O-phospho-L-erythronate + ADP + H(+). The enzyme catalyses 3-dehydro-D-erythronate + ATP = 3-dehydro-4-O-phospho-D-erythronate + ADP + H(+). Catalyzes the ATP-dependent phosphorylation of 3-oxo-tetronate to 3-oxo-tetronate 4-phosphate. In Salmonella typhimurium (strain LT2 / SGSC1412 / ATCC 700720), this protein is 3-oxo-tetronate kinase.